The following is a 396-amino-acid chain: Elongation factor Tu (396 aa).

One can recognise a tr-type G domain in the interval 10-206 (KPHVNIGTIG…AVDEYIPDPV (197 aa)). The segment at 19–26 (GHVDHGKT) is G1. 19–26 (GHVDHGKT) lines the GTP pocket. Mg(2+) is bound at residue threonine 26. The tract at residues 62–66 (GITIN) is G2. A G3 region spans residues 83–86 (DAPG). GTP-binding positions include 83-87 (DAPGH) and 138-141 (NKSD). The G4 stretch occupies residues 138–141 (NKSD). The G5 stretch occupies residues 176–178 (SGL).

The protein belongs to the TRAFAC class translation factor GTPase superfamily. Classic translation factor GTPase family. EF-Tu/EF-1A subfamily. Monomer.

It is found in the cytoplasm. The enzyme catalyses GTP + H2O = GDP + phosphate + H(+). Its function is as follows. GTP hydrolase that promotes the GTP-dependent binding of aminoacyl-tRNA to the A-site of ribosomes during protein biosynthesis. This chain is Elongation factor Tu, found in Micrococcus luteus (strain ATCC 4698 / DSM 20030 / JCM 1464 / CCM 169 / CCUG 5858 / IAM 1056 / NBRC 3333 / NCIMB 9278 / NCTC 2665 / VKM Ac-2230) (Micrococcus lysodeikticus).